The chain runs to 103 residues: N(4)-acetylcytidine amidohydrolase (103 aa).

Positions 6-101 (ITFFQRFQDD…QTQFYVIEFK (96 aa)) constitute an ASCH domain. Lys-21 acts as the Proton acceptor in catalysis. The active-site Nucleophile is the Thr-24. The active-site Proton donor is Glu-74.

This sequence belongs to the N(4)-acetylcytidine amidohydrolase family.

The enzyme catalyses N(4)-acetylcytidine + H2O = cytidine + acetate + H(+). It carries out the reaction N(4)-acetyl-2'-deoxycytidine + H2O = 2'-deoxycytidine + acetate + H(+). It catalyses the reaction N(4)-acetylcytosine + H2O = cytosine + acetate + H(+). Catalyzes the hydrolysis of N(4)-acetylcytidine (ac4C). The sequence is that of N(4)-acetylcytidine amidohydrolase (yqfB) from Escherichia fergusonii (strain ATCC 35469 / DSM 13698 / CCUG 18766 / IAM 14443 / JCM 21226 / LMG 7866 / NBRC 102419 / NCTC 12128 / CDC 0568-73).